A 146-amino-acid polypeptide reads, in one-letter code: uncharacterized protein (146 aa).

Residues 1–137 form the HTH marR-type domain; sequence MLSQEFFNSF…TINVMNQIHE (137 aa).

This is an uncharacterized protein from Staphylococcus aureus (strain MRSA252).